Consider the following 206-residue polypeptide: MASGKFITFEGIDGAGKTTHLAWFCERLQGRLAAAGRQVVVTREPGGTQLGEKLREILLNQPMDLETEALLMFAARREHLALVIEPALARGDWVVSDRFTDATFAYQGGGRGLPRDKLETLERWVQGGFQPDLTVLFDVAPQVASERRGAARMPDKFESESDAFFSRTRAEYLRRAEEAPHRFAIVDATRSIPEIRQQLERVLAAL.

An ATP-binding site is contributed by 11–18 (GIDGAGKT).

Belongs to the thymidylate kinase family.

It carries out the reaction dTMP + ATP = dTDP + ADP. Its function is as follows. Phosphorylation of dTMP to form dTDP in both de novo and salvage pathways of dTTP synthesis. This is Thymidylate kinase from Burkholderia cenocepacia (strain ATCC BAA-245 / DSM 16553 / LMG 16656 / NCTC 13227 / J2315 / CF5610) (Burkholderia cepacia (strain J2315)).